Consider the following 307-residue polypeptide: MAEISAALVKELREKTGAGMMDCKKALTETSGDMEAAVDWLRKKGLAAAAKKSGRVAAEGLVGVVAAPTAGACVEVNAETDFVARNETFQNFVAKVTELALTTGDDVEKLQSQPFPGTGRTVAEELTHLVATIGENMTIRRAARLSVTQGIVSTYMHSSLVPNLGKIGVLVALESAGDQAKLQELGKQIAMHIAAARPEALDIADVDPSKLNRERDVLADQARASGKPEEIVQKMVEGRVRKYYEEVVLLEQVFVVDGETKIRKVVENAGKTVGAPVKLTGFVRFALGEGIEKATSDFAAEVASMAG.

The interval 80–83 is involved in Mg(2+) ion dislocation from EF-Tu; that stretch reads TDFV.

It belongs to the EF-Ts family.

Its subcellular location is the cytoplasm. Functionally, associates with the EF-Tu.GDP complex and induces the exchange of GDP to GTP. It remains bound to the aminoacyl-tRNA.EF-Tu.GTP complex up to the GTP hydrolysis stage on the ribosome. The polypeptide is Elongation factor Ts (Rhodospirillum centenum (strain ATCC 51521 / SW)).